The primary structure comprises 626 residues: ATP-dependent RNA helicase cyt-19, mitochondrial (626 aa).

A Q motif motif is present at residues 74-103; that stretch reads ADLAALGVHENVVRAITHGMGYENMTEVQS. A Helicase ATP-binding domain is found at 106-297; sequence ISPALKGKDI…RSYIDKNNFE (192 aa). 119–126 contributes to the ATP binding site; it reads AKTGTGKT. The short motif at 241–244 is the DEAD box element; that stretch reads DEAD. A Helicase C-terminal domain is found at 329 to 493; the sequence is AMLELIEKAL…CASVNAADSG (165 aa). The disordered stretch occupies residues 569–626; it reads LRVETREHSMRPMGSGPGHRRDFNSRGPRRQSDDPFENALHRAQDLDRRPTRRQQASF. An RNA-binding region spans residues 578-626; it reads MRPMGSGPGHRRDFNSRGPRRQSDDPFENALHRAQDLDRRPTRRQQASF. Basic and acidic residues predominate over residues 607-617; sequence ALHRAQDLDRR.

The protein belongs to the DEAD box helicase family.

Its subcellular location is the mitochondrion matrix. The enzyme catalyses ATP + H2O = ADP + phosphate + H(+). Its activity is regulated as follows. Activated by exposed helices in a group I intron RNA. Acts as an RNA chaperone to resolve non-native structures formed during RNA folding to promote mitochondrial group I, but also group II, intron splicing. Functions predominantly by disrupting accessible RNA secondary structure and depends on spontaneous openings in tightly packed RNAs to gain access to RNA helices. This Neurospora crassa (strain ATCC 24698 / 74-OR23-1A / CBS 708.71 / DSM 1257 / FGSC 987) protein is ATP-dependent RNA helicase cyt-19, mitochondrial.